The sequence spans 542 residues: ABC transport system permease protein p69 (542 aa).

Helical transmembrane passes span 23-43 (ALAIIVLVVIIYSFIDNFSGF), 77-97 (IFYVVSGSILGFVIALWFSYL), 114-134 (FTIFLRSFPVLVFAFLFNNLF), 140-160 (ATLTITWFSWLWSTKYITAFF), 212-232 (LSIAGITGIGELIATPLGGTV), 236-256 (LVLIPMLTLIGFLLFLEASVF), 287-307 (VMIYILALVLAAFTLANLVQL), 350-370 (TQAISLITLVFVLALLFGFLA), 386-406 (LLVIRVIPSVLLFRLFDPIIF), 412-432 (IIFVLAIHSAASYGQLITINF), 481-501 (LVVFGIFGGSIIGGRINNFFE), and 509-529 (GTITLPLMVYLMVFEVILMAV). In terms of domain architecture, ABC transmembrane type-1 spans 349–526 (TTQAISLITL…VYLMVFEVIL (178 aa)).

This sequence belongs to the binding-protein-dependent transport system permease family.

The protein resides in the cell membrane. In terms of biological role, probably part of a high-affinity transport system. This chain is ABC transport system permease protein p69 (p69), found in Mycoplasma pneumoniae (strain ATCC 29342 / M129 / Subtype 1) (Mycoplasmoides pneumoniae).